The following is a 384-amino-acid chain: Early estrogen-induced gene 1 protein (384 aa).

The 144-residue stretch at 2–145 (AFLMKKKKFK…ILKVTIGMFL (144 aa)) folds into the C2 NT-type domain. The segment at 129-138 (NTRQDNSILK) is required for interaction with TNFRSF11A/RANK. The tract at residues 173-315 (LTCKGGGTSS…RRKKDSVESH (143 aa)) is disordered. Over residues 183 to 193 (GGSSTNSLTGS) the composition is skewed to low complexity. Residues 227–254 (SRNSSYASQQSKISGYSTEHSRSSSLSD) are compositionally biased toward polar residues. Composition is skewed to basic and acidic residues over residues 280–292 (GSER…EKPP) and 299–315 (HLSD…VESH).

The protein belongs to the EEIG family. Part of a complex composed of EEIG1, TNFRSF11A/RANK, PLCG2, GAB2, TEC and BTK; complex formation increases in the presence of TNFSF11/RANKL. Interacts with PRDM1/BLIMP1; following TNFSF11/RANKL stimulation in bone marrow-derived macrophages, the interaction promotes the binding of PRDM1/BLIMP1 to the gene promoter of IRF8.

The protein resides in the nucleus. It localises to the cytoplasm. The protein localises to the membrane raft. In terms of biological role, key component of TNFSF11/RANKL- and TNF-induced osteoclastogenesis pathways, thereby mediates bone resorption in pathological bone loss conditions. Required for TNFSF11/RANKL-induced osteoclastogenesis via its interaction with TNFRSF11A/RANK, thereby facilitates the downsteam transcription of NFATC1 and activation of PLCG2. Facilitates recruitment of the transcriptional repressor PRDM1/BLIMP1 to the promoter of the anti-osteoclastogenesis gene IRF8, thereby resulting in transcription of osteoclast differentiation factors. May play a role in estrogen action. The sequence is that of Early estrogen-induced gene 1 protein from Homo sapiens (Human).